Consider the following 488-residue polypeptide: ATP synthase subunit beta (488 aa).

164-171 (GGAGVGKT) provides a ligand contact to ATP.

The protein belongs to the ATPase alpha/beta chains family. In terms of assembly, F-type ATPases have 2 components, CF(1) - the catalytic core - and CF(0) - the membrane proton channel. CF(1) has five subunits: alpha(3), beta(3), gamma(1), delta(1), epsilon(1). CF(0) has four main subunits: a(1), b(1), b'(1) and c(9-12).

It localises to the cellular thylakoid membrane. It catalyses the reaction ATP + H2O + 4 H(+)(in) = ADP + phosphate + 5 H(+)(out). Functionally, produces ATP from ADP in the presence of a proton gradient across the membrane. The catalytic sites are hosted primarily by the beta subunits. The polypeptide is ATP synthase subunit beta (Prochlorococcus marinus (strain NATL2A)).